The following is a 624-amino-acid chain: Glutaminase 2 (624 aa).

A disordered region spans residues 1-20; that stretch reads MDTQPIRLPSVAGATRSAGY. The interval 43-325 is glutaminase; that stretch reads GELADYIPEL…LSARFDLHML (283 aa). Substrate contacts are provided by Ser85, Asn134, Glu178, Asn185, Tyr209, Tyr261, and Val279. Positions 355-466 constitute an STAS domain; sequence QQILDERHSD…ALLDDAIEWA (112 aa). Residue 491-608 participates in a nucleoside 3',5'-cyclic phosphate binding; that stretch reads LLAELDTDEI…IMRNLAAILA (118 aa).

This sequence belongs to the glutaminase family. Homotetramer.

The enzyme catalyses L-glutamine + H2O = L-glutamate + NH4(+). This is Glutaminase 2 (glsA2) from Bradyrhizobium diazoefficiens (strain JCM 10833 / BCRC 13528 / IAM 13628 / NBRC 14792 / USDA 110).